A 488-amino-acid chain; its full sequence is Tyrosine-protein kinase Srms (488 aa).

One can recognise an SH3 domain in the interval 51-112; sequence PFPQLFLALY…PITHVAKASP (62 aa). The region spanning 120-212 is the SH2 domain; it reads WYFSGVSRTQ…LIQNPLLQPC (93 aa). In terms of domain architecture, Protein kinase spans 230–488; sequence FALGRKLGEG…KLHAIHRCHP (259 aa). ATP contacts are provided by residues 236-244 and K258; that span reads LGEGYFGEV. The active-site Proton acceptor is the D350. Position 380 is a phosphotyrosine; by autocatalysis (Y380).

This sequence belongs to the protein kinase superfamily. Tyr protein kinase family. SRC subfamily. Interacts (via the SH2 and SH3 domains) with DOK1. Interacts with KHDRBS1/SAM68 and VIM. Highly expressed in most breast cancers (at protein level).

Its subcellular location is the cytoplasm. It carries out the reaction L-tyrosyl-[protein] + ATP = O-phospho-L-tyrosyl-[protein] + ADP + H(+). Functionally, non-receptor tyrosine-protein kinase which phosphorylates DOK1 on tyrosine residues. Also phosphorylates KHDRBS1/SAM68 and VIM on tyrosine residues. Phosphorylation of KHDRBS1 is EGF-dependent. Phosphorylates OTUB1, promoting deubiquitination of RPTOR. This Homo sapiens (Human) protein is Tyrosine-protein kinase Srms (SRMS).